Reading from the N-terminus, the 460-residue chain is Zinc transporter 6 (460 aa).

The Cytoplasmic segment spans residues 1–33; that stretch reads MGTIHLFRKSQRSLVGKLTHEFRLVAADRRSWK. A helical membrane pass occupies residues 34–54; it reads ILLFGAINLICIGFLLMWCSS. Residues 55-64 are Extracellular-facing; the sequence is TNSIALTAYT. The chain crosses the membrane as a helical span at residues 65-85; it reads YLTIFDLFSLITCLISYWVMV. Residues 86–98 lie on the Cytoplasmic side of the membrane; it reads KKPSPVYSFGFER. A helical transmembrane segment spans residues 99–119; it reads FEVLAVFASTVLAQLGALFIL. At 120–134 the chain is on the extracellular side; sequence KESAERFLEQPEIHT. The chain crosses the membrane as a helical span at residues 135–155; it reads GRLLVGTFVALFFNLFTMLSV. Over 156–200 the chain is Cytoplasmic; sequence RNKPFAYVSEAASTSWLQEHVADLSRSICGIIPGLSSIFLPRMNP. The chain crosses the membrane as a helical span at residues 201–221; the sequence is FVLIDIAGALALCITYMLIEI. Over 222–228 the chain is Extracellular; the sequence is NNYYAVD. Residues 229–249 traverse the membrane as a helical segment; the sequence is TASAIAIALMTFGTMYPMSVY. Over 250–460 the chain is Cytoplasmic; sequence SGKVLLQTTP…GTNTRGQSRP (211 aa). The disordered stretch occupies residues 372 to 392; sequence PVTSTPAKPSSPPPEFSFNTP.

It belongs to the cation diffusion facilitator (CDF) transporter (TC 2.A.4) family. SLC30A subfamily. In terms of assembly, heterodimer with SLC30A5; form a functional zinc ion transmembrane transporter.

It is found in the golgi apparatus. The protein resides in the trans-Golgi network membrane. Functionally, has probably no intrinsic transporter activity but together with SLC30A5 forms a functional zinc ion:proton antiporter heterodimer, mediating zinc entry into the lumen of organelles along the secretory pathway. As part of that zinc ion:proton antiporter, contributes to zinc ion homeostasis within the early secretory pathway and regulates the activation and folding of enzymes like alkaline phosphatases and enzymes involved in phosphatidylinositol glycan anchor biosynthesis. The polypeptide is Zinc transporter 6 (SLC30A6) (Gallus gallus (Chicken)).